Consider the following 23-residue polypeptide: uncharacterized protein (23 aa).

It localises to the plastid. The protein localises to the chloroplast. This is an uncharacterized protein from Zea mays (Maize).